Here is a 234-residue protein sequence, read N- to C-terminus: Ubiquinone biosynthesis O-methyltransferase (234 aa).

S-adenosyl-L-methionine contacts are provided by R36, G56, D77, and M125.

It belongs to the methyltransferase superfamily. UbiG/COQ3 family.

It carries out the reaction a 3-demethylubiquinol + S-adenosyl-L-methionine = a ubiquinol + S-adenosyl-L-homocysteine + H(+). The enzyme catalyses a 3-(all-trans-polyprenyl)benzene-1,2-diol + S-adenosyl-L-methionine = a 2-methoxy-6-(all-trans-polyprenyl)phenol + S-adenosyl-L-homocysteine + H(+). The protein operates within cofactor biosynthesis; ubiquinone biosynthesis. Functionally, O-methyltransferase that catalyzes the 2 O-methylation steps in the ubiquinone biosynthetic pathway. The sequence is that of Ubiquinone biosynthesis O-methyltransferase from Actinobacillus pleuropneumoniae serotype 5b (strain L20).